The sequence spans 569 residues: Methionine--tRNA ligase (569 aa).

A 'HIGH' region motif is present at residues 11 to 21 (PYINGVKHLGN). 4 residues coordinate Zn(2+): cysteine 143, cysteine 146, cysteine 156, and cysteine 159. Residues 342–346 (KFSTS) carry the 'KMSKS' region motif. Threonine 345 serves as a coordination point for ATP.

It belongs to the class-I aminoacyl-tRNA synthetase family. MetG type 1 subfamily. Monomer. It depends on Zn(2+) as a cofactor.

Its subcellular location is the cytoplasm. The enzyme catalyses tRNA(Met) + L-methionine + ATP = L-methionyl-tRNA(Met) + AMP + diphosphate. Is required not only for elongation of protein synthesis but also for the initiation of all mRNA translation through initiator tRNA(fMet) aminoacylation. This is Methionine--tRNA ligase from Caulobacter sp. (strain K31).